Reading from the N-terminus, the 208-residue chain is MLGLLVALLALGLAVFALLDVWYLVRLPCAVLRARLLQPRVRDLLAEQRFPGRVLPSDLDLLLHMNNARYLREADFARVAHLTRCGVLGALRELRAHTVLAASCARHRRSLRLLEPFEVRTRLLGWDDRAFYLEARFVSLRDGFVCALLRFRQHLLGTSPERVVQHLCQRRVEPPELPADLQHWISYNEASSQLLRMESGLSDVTKDQ.

Residues 1-17 (MLGLLVALLALGLAVFA) form the signal peptide. Position 199 is a phosphoserine (serine 199).

This sequence belongs to the THEM6 family.

The protein resides in the secreted. The sequence is that of Protein THEM6 (THEM6) from Homo sapiens (Human).